The primary structure comprises 275 residues: Large ribosomal subunit protein uL2 (275 aa).

A compositionally biased stretch (basic and acidic residues) spans 28 to 38 (RPYDGLLEKKS). Disordered regions lie at residues 28–58 (RPYDGLLEKKSKSGGRNNNGRITTRHVGGGH) and 223–275 (VAMN…RKAK). Positions 254–275 (KGHKTRKNKRTDKLIVRRRKAK) are enriched in basic residues.

It belongs to the universal ribosomal protein uL2 family. As to quaternary structure, part of the 50S ribosomal subunit. Forms a bridge to the 30S subunit in the 70S ribosome.

Its function is as follows. One of the primary rRNA binding proteins. Required for association of the 30S and 50S subunits to form the 70S ribosome, for tRNA binding and peptide bond formation. It has been suggested to have peptidyltransferase activity; this is somewhat controversial. Makes several contacts with the 16S rRNA in the 70S ribosome. The sequence is that of Large ribosomal subunit protein uL2 from Chromohalobacter salexigens (strain ATCC BAA-138 / DSM 3043 / CIP 106854 / NCIMB 13768 / 1H11).